A 967-amino-acid polypeptide reads, in one-letter code: Leucine--tRNA ligase (967 aa).

Residues P43 to H53 carry the 'HIGH' region motif. The short motif at K650–S654 is the 'KMSKS' region element. K653 serves as a coordination point for ATP.

Belongs to the class-I aminoacyl-tRNA synthetase family.

It is found in the cytoplasm. It catalyses the reaction tRNA(Leu) + L-leucine + ATP = L-leucyl-tRNA(Leu) + AMP + diphosphate. The protein is Leucine--tRNA ligase of Thermococcus onnurineus (strain NA1).